Consider the following 168-residue polypeptide: Alkyl hydroperoxide reductase C (168 aa).

Residues 1–138 (EFIEVSEESF…LVNKIKAAQY (138 aa)) enclose the Thioredoxin domain. The active-site Cysteine sulfenic acid (-SOH) intermediate is the C28.

The protein belongs to the peroxiredoxin family. AhpC/Prx1 subfamily. In terms of assembly, homodimer; disulfide-linked, upon oxidation. 5 homodimers assemble to form a ring-like decamer.

Its subcellular location is the cytoplasm. The enzyme catalyses a hydroperoxide + NADH + H(+) = an alcohol + NAD(+) + H2O. Functionally, thiol-specific peroxidase that catalyzes the reduction of hydrogen peroxide and organic hydroperoxides to water and alcohols, respectively. Plays a role in cell protection against oxidative stress by detoxifying peroxides. The sequence is that of Alkyl hydroperoxide reductase C from Ferdinandcohnia aciditolerans (strain JCM 32973 / CCTCC AB 2017280 / YN-1) (Bacillus aciditolerans).